The chain runs to 325 residues: MKRLGSVQRKMPCVFVTEVKEEPSSKREHQPFKVLATETISHKALDADIYSAIPTEKVDGTCCYVTTYKDQPYLWARLDRKPNKQAEKRFKNFLHSKENAKEFFWNVEEDFKPAPECWIPAKEIEQINGNPVPDENGHIPGWVPVEKNNKQYCWHSSVVNYEFEIALVLKHHPDDSGLLEISAVPLSDLLEQTLELVGTNINGNPYGLGSKKHPLHLLIPHGAFQIRNLPSLKHNDLLSWFEGCKEGKIEGIVWHCSDGCLIKVHRHHLGLCWPIPDTYMNSRPVIINMNLNKCDSAFDIKCLFNHFLKIDNQKFARLKDIIFDV.

Mg(2+) is required as a cofactor. It depends on Mn(2+) as a cofactor. Post-translationally, AMPylates itself (auto-AMPylation).

It carries out the reaction ATP + (ribonucleotide)n-3'-hydroxyl + 5'-phospho-(ribonucleotide)m = (ribonucleotide)n+m + AMP + diphosphate.. Functions as an RNA ligase, in vitro. The ligation reaction entails three nucleotidyl transfer steps. In the first step, the RNA ligase reacts with ATP in the absence of nucleic acid to form a covalent ligase-AMP intermediate and release pyrophosphate. In step 2, the ligase-AMP binds to the nucleic acid and transfers the adenylate to the 5'-PO4 terminus to form an adenylylated intermediate. In step 3, the RNA ligase directs the attack of the 3'-OH on the 5'-phosphoanhydride linkage, resulting in a repaired 3'-5' phosphodiester and release of AMP. Exhibits selectivity for single-stranded RNA substrates and may not have nick-sealing activity on double-stranded DNA-RNA hybrids. May play a role in maintaining RNA integrity under stress conditions, for example in response to reactive oxygen species (ROS). This Pongo abelii (Sumatran orangutan) protein is RNA ligase 1.